A 458-amino-acid polypeptide reads, in one-letter code: Monomethylamine methyltransferase MtmB2 (458 aa).

Pyl-202 is a non-standard amino acid (pyrrolysine).

Belongs to the monomethylamine methyltransferase family. In terms of assembly, can form a complex with MtmC.

The catalysed reaction is Co(I)-[methylamine-specific corrinoid protein] + methylamine + H(+) = methyl-Co(III)-[methylamine-specific corrinoid protein] + NH4(+). The protein operates within one-carbon metabolism; methanogenesis from methylamine. In terms of biological role, catalyzes the transfer of the methyl group from monomethylamine to the corrinoid cofactor of MtmC. In Methanosarcina acetivorans (strain ATCC 35395 / DSM 2834 / JCM 12185 / C2A), this protein is Monomethylamine methyltransferase MtmB2 (mtmB2).